We begin with the raw amino-acid sequence, 89 residues long: UPF0175 protein APE_0276a (89 aa).

It belongs to the UPF0175 family.

This is UPF0175 protein APE_0276a from Aeropyrum pernix (strain ATCC 700893 / DSM 11879 / JCM 9820 / NBRC 100138 / K1).